Consider the following 114-residue polypeptide: RutC family protein YoaB (114 aa).

It belongs to the RutC family.

This Escherichia coli O6:H1 (strain CFT073 / ATCC 700928 / UPEC) protein is RutC family protein YoaB (yoaB).